A 514-amino-acid chain; its full sequence is CBL-interacting protein kinase 25 (514 aa).

The region spanning 21-281 is the Protein kinase domain; the sequence is YEFGPLVGEG…IPEIMEMRWF (261 aa). Residues 27-35 and K50 contribute to the ATP site; that span reads VGEGNFAKV. Residue D149 is the Proton acceptor of the active site. The activation loop stretch occupies residues 167-196; sequence DFGLSALADMERREAHLQTVCGTPLFLAPE. The segment at 303–340 is disordered; the sequence is GLDGEPELYDSDTDTIESSSSSESPTPVAGTPRGMHTS. Residues 304 to 317 show a composition bias toward acidic residues; the sequence is LDGEPELYDSDTDT. Positions 318–329 are enriched in low complexity; it reads IESSSSSESPTP. One can recognise an NAF domain in the interval 323–395; it reads SSESPTPVAG…PSFDLSGLFE (73 aa). Residues 398–427 are PPI; it reads GERMRFVSGAPVADIIAKLQEIAGMVSFTA.

This sequence belongs to the protein kinase superfamily. CAMK Ser/Thr protein kinase family. SNF1 subfamily. Requires Mn(2+) as cofactor.

The enzyme catalyses L-seryl-[protein] + ATP = O-phospho-L-seryl-[protein] + ADP + H(+). The catalysed reaction is L-threonyl-[protein] + ATP = O-phospho-L-threonyl-[protein] + ADP + H(+). Its function is as follows. CIPK serine-threonine protein kinases interact with CBL proteins. Binding of a CBL protein to the regulatory NAF domain of CIPK protein lead to the activation of the kinase in a calcium-dependent manner. The sequence is that of CBL-interacting protein kinase 25 (CIPK25) from Oryza sativa subsp. japonica (Rice).